Reading from the N-terminus, the 754-residue chain is DNA topoisomerase 4 subunit A (754 aa).

A Topo IIA-type catalytic domain is found at 38–501 (LPHIGDGLKP…EARALSETEL (464 aa)). Residue Tyr-127 is the O-(5'-phospho-DNA)-tyrosine intermediate of the active site.

It belongs to the type II topoisomerase GyrA/ParC subunit family. ParC type 1 subfamily. Heterotetramer composed of ParC and ParE.

Its subcellular location is the cell membrane. It catalyses the reaction ATP-dependent breakage, passage and rejoining of double-stranded DNA.. In terms of biological role, topoisomerase IV is essential for chromosome segregation. It relaxes supercoiled DNA. Performs the decatenation events required during the replication of a circular DNA molecule. The polypeptide is DNA topoisomerase 4 subunit A (Pseudomonas aeruginosa (strain ATCC 15692 / DSM 22644 / CIP 104116 / JCM 14847 / LMG 12228 / 1C / PRS 101 / PAO1)).